We begin with the raw amino-acid sequence, 265 residues long: Probable aquaporin TIP3-2 (265 aa).

2 consecutive transmembrane segments (helical) span residues 32 to 52 and 62 to 82; these read LSEFVATAVFVFAAEGSVYGL and LGGLLVVAVAHALALAAAVAV. Residues 92–94 carry the NPA 1 motif; it reads NPA. The next 3 helical transmembrane spans lie at 110 to 130, 151 to 171, and 179 to 199; these read AALYWAAQLLGAVLAVLLLRL, ALLLEVVMTFGLVYTVYATAV, and DIAPLAIGLVAGANILAGGPF. The NPA 2 signature appears at 205 to 207; sequence NPA. The helical transmembrane segment at 223 to 243 threads the bilayer; that stretch reads WVYWLGPLIGAGMAGALYEFV.

Belongs to the MIP/aquaporin (TC 1.A.8) family. TIP (TC 1.A.8.10) subfamily. Expressed in leaves and at lower levels in roots.

It is found in the vacuole membrane. Its function is as follows. Aquaporins facilitate the transport of water and small neutral solutes across cell membranes. May be involved in transport from the vacuolar compartment to the cytoplasm. In Oryza sativa subsp. japonica (Rice), this protein is Probable aquaporin TIP3-2 (TIP3-2).